The sequence spans 488 residues: Glutamate--tRNA ligase (488 aa).

The 'HIGH' region motif lies at 9 to 19 (PSPTGFLHIGG). The Zn(2+) site is built by cysteine 112, cysteine 114, cysteine 139, and histidine 141. The 'KMSKS' region signature appears at 256–260 (KLSKR). Lysine 259 serves as a coordination point for ATP.

It belongs to the class-I aminoacyl-tRNA synthetase family. Glutamate--tRNA ligase type 1 subfamily. In terms of assembly, monomer. Zn(2+) is required as a cofactor.

It is found in the cytoplasm. The catalysed reaction is tRNA(Glu) + L-glutamate + ATP = L-glutamyl-tRNA(Glu) + AMP + diphosphate. Functionally, catalyzes the attachment of glutamate to tRNA(Glu) in a two-step reaction: glutamate is first activated by ATP to form Glu-AMP and then transferred to the acceptor end of tRNA(Glu). The sequence is that of Glutamate--tRNA ligase from Elusimicrobium minutum (strain Pei191).